An 80-amino-acid polypeptide reads, in one-letter code: Conotoxin SmIVA (80 aa).

Positions 1-21 are cleaved as a signal peptide; it reads MGMRMMFTVFLLVVLATTVVS. Residues 22-38 constitute a propeptide that is removed on maturation; it reads IPSDRASDGRNAAVNER. Glutamine 39 is modified (pyrrolidone carboxylic acid). Serine 45 is a glycosylation site (O-linked (HexNAc...) serine). 4-hydroxyproline is present on residues proline 55, proline 60, proline 70, and proline 72. The residue at position 75 (serine 75) is a Serine amide. A propeptide spanning residues 76-80 is cleaved from the precursor; it reads GRRND.

The protein belongs to the conotoxin A superfamily. In terms of processing, contains 3 disulfide bonds. In terms of tissue distribution, expressed by the venom duct.

Its subcellular location is the secreted. Functionally, neurotoxin with probable activity on sodium channel. Induces intense repetitive firing of the frog neuromuscular junction, leading to a tetanic contracture in muscle fiber (spastic paralysis). In vivo, shows the same effect as the whole venom when injected on fish prey. This is Conotoxin SmIVA from Conus stercusmuscarum (Fly-specked cone).